We begin with the raw amino-acid sequence, 597 residues long: Dynein intermediate chain 3, ciliary (597 aa).

7 WD repeats span residues 159–210, 213–253, 260–301, 314–354, 361–400, 404–444, and 449–488; these read EIKR…KPEF, KPVS…QAVE, SHHD…EPTE, ENAQ…PPEK, EHIG…SSIM, YHMS…KDPT, and VSDD…CTMQ. Disordered stretches follow at residues 512–546 and 562–597; these read RQRE…VAAA and AAQQ…EKEG. The segment covering 528 to 542 has biased composition (acidic residues); it reads QDDDEEGGPDEEEDL. The span at 584-597 shows a compositional bias: basic and acidic residues; sequence GSEKKDTENGEKEG.

Belongs to the dynein intermediate chain family. In terms of assembly, consists of at least two heavy chains (alpha and beta), three intermediate chains and several light chains.

The protein resides in the cytoplasm. Its subcellular location is the cytoskeleton. The protein localises to the cilium axoneme. May play a role in the regulation of dynein heavy chain activity. This Heliocidaris crassispina (Sea urchin) protein is Dynein intermediate chain 3, ciliary.